A 400-amino-acid chain; its full sequence is Mannitol-1-phosphate 5-dehydrogenase (400 aa).

12–23 is an NAD(+) binding site; it reads AVHFGAGNIGRG. The active site involves K221.

Belongs to the mannitol dehydrogenase family. Monomer.

The catalysed reaction is D-mannitol 1-phosphate + NAD(+) = beta-D-fructose 6-phosphate + NADH + H(+). Its function is as follows. Catalyzes the NAD(H)-dependent interconversion of D-fructose 6-phosphate and D-mannitol 1-phosphate in the mannitol metabolic pathway. This is Mannitol-1-phosphate 5-dehydrogenase from Pyricularia oryzae (strain Y34) (Rice blast fungus).